Here is a 508-residue protein sequence, read N- to C-terminus: Maturase K (508 aa).

It belongs to the intron maturase 2 family. MatK subfamily.

The protein localises to the plastid. Its subcellular location is the chloroplast. Usually encoded in the trnK tRNA gene intron. Probably assists in splicing its own and other chloroplast group II introns. This chain is Maturase K, found in Collinsia heterophylla (Purple Chinese houses).